Consider the following 334-residue polypeptide: Protein FAM50B (334 aa).

An N-acetylalanine modification is found at Ala2. The tract at residues 122–175 (FTLDEEEGDQEDSRQAESAEAHSAGAKKNLGKNPDVDTSFLPDREREEEENRLR) is disordered. Composition is skewed to basic and acidic residues over residues 132-141 (EDSRQAESAE) and 163-175 (PDRE…NRLR).

The protein belongs to the FAM50 family. In terms of tissue distribution, widely expressed. Abundant in testis, where it is expressed in seminiferous tubules, not in the interstitium. At the cellular level, expressed in primary spermatocytes and round spermatids, but not detectable in spermatogonia, elongating spermatids, mature spermatozoa, Sertoli cells or Leydig cells.

This Mus musculus (Mouse) protein is Protein FAM50B (Fam50b).